The primary structure comprises 346 residues: MNSILRHNWNLKEVEALFAMPFNDLMFKAQTIHRENFNPNEVQVSTLLSIKTGACPEDCKYCSQSARNKTDLEKESLLAVEKVLEAAQRAKEMGSTRFCMGAAWRNPKERDMPYVLDMVKSVKALGMETCMTLGMLSGDQADQLNGAGLDYYNHNLDTSPEHYNQIITTRTFQDRLDTLSNVRSAGMKVCSGGIVGLGEKAVDRSSLLIQLANLNPQPESVPINMLVKVEGTPLADIDDLESFDFIRCIAVARIMMPHSHVRLSAGRTAMNEQMQAMCFLAGANSIFYGCKLLTAENPETNQDIALFEKLGINTETVAGDTERSDNIVKTAIVDQQNSDLFYNASA.

Positions 40–264 (NEVQVSTLLS…MMPHSHVRLS (225 aa)) constitute a Radical SAM core domain. [4Fe-4S] cluster is bound by residues Cys55, Cys59, and Cys62. Residues Cys99, Cys130, Cys190, and Arg262 each coordinate [2Fe-2S] cluster.

It belongs to the radical SAM superfamily. Biotin synthase family. In terms of assembly, homodimer. The cofactor is [4Fe-4S] cluster. [2Fe-2S] cluster is required as a cofactor.

The catalysed reaction is (4R,5S)-dethiobiotin + (sulfur carrier)-SH + 2 reduced [2Fe-2S]-[ferredoxin] + 2 S-adenosyl-L-methionine = (sulfur carrier)-H + biotin + 2 5'-deoxyadenosine + 2 L-methionine + 2 oxidized [2Fe-2S]-[ferredoxin]. It functions in the pathway cofactor biosynthesis; biotin biosynthesis; biotin from 7,8-diaminononanoate: step 2/2. Functionally, catalyzes the conversion of dethiobiotin (DTB) to biotin by the insertion of a sulfur atom into dethiobiotin via a radical-based mechanism. This chain is Biotin synthase, found in Colwellia psychrerythraea (strain 34H / ATCC BAA-681) (Vibrio psychroerythus).